Here is a 392-residue protein sequence, read N- to C-terminus: Succinate--CoA ligase [ADP-forming] subunit beta (392 aa).

An ATP-grasp domain is found at 9–236 (RDLFERHGLP…QAAVDPLEQA (228 aa)). Residues Lys-45, 52–54 (GRG), Ala-94, and Glu-99 each bind ATP. Mg(2+) is bound by residues Asn-191 and Asp-205. Residues Asn-256 and 318-320 (GIT) contribute to the substrate site.

Belongs to the succinate/malate CoA ligase beta subunit family. In terms of assembly, heterotetramer of two alpha and two beta subunits. Requires Mg(2+) as cofactor.

It carries out the reaction succinate + ATP + CoA = succinyl-CoA + ADP + phosphate. The catalysed reaction is GTP + succinate + CoA = succinyl-CoA + GDP + phosphate. Its pathway is carbohydrate metabolism; tricarboxylic acid cycle; succinate from succinyl-CoA (ligase route): step 1/1. In terms of biological role, succinyl-CoA synthetase functions in the citric acid cycle (TCA), coupling the hydrolysis of succinyl-CoA to the synthesis of either ATP or GTP and thus represents the only step of substrate-level phosphorylation in the TCA. The beta subunit provides nucleotide specificity of the enzyme and binds the substrate succinate, while the binding sites for coenzyme A and phosphate are found in the alpha subunit. This Salinispora tropica (strain ATCC BAA-916 / DSM 44818 / JCM 13857 / NBRC 105044 / CNB-440) protein is Succinate--CoA ligase [ADP-forming] subunit beta.